Here is a 455-residue protein sequence, read N- to C-terminus: Gamma-aminobutyric acid receptor subunit alpha-1 (455 aa).

An N-terminal signal peptide occupies residues 1-27 (MKRLLVLCDCLWAWSLLLNALTERSYG). Residues 28–253 (QTSSQDELKD…FHLKRKIGYF (226 aa)) lie on the Extracellular side of the membrane. The N-linked (GlcNAc...) asparagine glycan is linked to asparagine 38. Arginine 94 contacts 4-aminobutanoate. Asparagine 138 carries an N-linked (GlcNAc...) asparagine glycan. Position 157 (threonine 157) interacts with 4-aminobutanoate. Cysteine 166 and cysteine 180 form a disulfide bridge. Residues 254 to 274 (VIQTYLPCIMTVILSQVSFWL) traverse the membrane as a helical segment. The Cytoplasmic segment spans residues 275–279 (NRESV). Residues 280 to 301 (PARTVFGVTTVLTMTTLSISAR) traverse the membrane as a helical segment. The Extracellular segment spans residues 302 to 311 (NSLPKVAYAT). A helical transmembrane segment spans residues 312-333 (AMDWFIAVCYAFVFSALIEFAT). Residues 334–420 (VNYFTKRGYA…TFNSVSKIDR (87 aa)) are Cytoplasmic-facing. The helical transmembrane segment at 421-440 (LSRIAFPLLFGIFNLVYWAT) threads the bilayer. Topologically, residues 441-455 (YLNREPQLKAPTPHQ) are extracellular.

The protein belongs to the ligand-gated ion channel (TC 1.A.9) family. Gamma-aminobutyric acid receptor (TC 1.A.9.5) subfamily. GABRA1 sub-subfamily. Heteropentamer, formed by a combination of alpha (GABRA1-6), beta (GABRB1-3), gamma (GABRG1-3), delta (GABRD), epsilon (GABRE), rho (GABRR1-3), pi (GABRP) and theta (GABRQ) subunits, each subunit exhibiting distinct physiological and pharmacological properties. Brain.

It localises to the postsynaptic cell membrane. The protein localises to the cell membrane. The catalysed reaction is chloride(in) = chloride(out). With respect to regulation, allosterically activated by benzodiazepines, the neuroanesthetic alphaxalone and pentobarbital. Inhibited by the antagonist bicuculline. Potentiated by histamine. Alpha subunit of the heteropentameric ligand-gated chloride channel gated by gamma-aminobutyric acid (GABA), a major inhibitory neurotransmitter in the brain. GABA-gated chloride channels, also named GABA(A) receptors (GABAAR), consist of five subunits arranged around a central pore and contain GABA active binding site(s) located at the alpha and beta subunit interface(s). When activated by GABA, GABAARs selectively allow the flow of chloride anions across the cell membrane down their electrochemical gradient. Chloride influx into the postsynaptic neuron following GABAAR opening decreases the neuron ability to generate a new action potential, thereby reducing nerve transmission. The GABAARs can also initiate the formation of functional inhibitory GABAergic synapses. GABAARs function also as histamine receptor where histamine binds at the interface of two neighboring beta subunits and potentiates GABA response. In Gallus gallus (Chicken), this protein is Gamma-aminobutyric acid receptor subunit alpha-1 (GABRA1).